Here is a 1059-residue protein sequence, read N- to C-terminus: Carbamoyl phosphate synthase large chain (1059 aa).

Residues 1-401 (MPKRKDIQKI…SLLKACRSLE (401 aa)) are carboxyphosphate synthetic domain. Arginine 129, arginine 169, glycine 175, glycine 176, arginine 208, isoleucine 210, glutamate 215, glycine 241, isoleucine 242, histidine 243, glutamine 284, and glutamate 298 together coordinate ATP. One can recognise an ATP-grasp 1 domain in the interval 133–327 (KQLMEELGQP…IAKLAAKIAV (195 aa)). Mg(2+)-binding residues include glutamine 284, glutamate 298, and asparagine 300. Mn(2+) is bound by residues glutamine 284, glutamate 298, and asparagine 300. The oligomerization domain stretch occupies residues 402 to 546 (VGVDHNELPA…YSTYGFENES (145 aa)). The carbamoyl phosphate synthetic domain stretch occupies residues 547-929 (VKSSKESVLV…ALYKAFEASY (383 aa)). In terms of domain architecture, ATP-grasp 2 spans 671–861 (EQALKELDIP…MAQVATRLIL (191 aa)). 10 residues coordinate ATP: arginine 707, serine 746, isoleucine 748, glutamate 752, glycine 777, valine 778, histidine 779, serine 780, glutamine 820, and glutamate 832. The Mg(2+) site is built by glutamine 820, glutamate 832, and asparagine 834. The Mn(2+) site is built by glutamine 820, glutamate 832, and asparagine 834. The 130-residue stretch at 930–1059 (LHLPNFGNVV…ESRSFTTEAI (130 aa)) folds into the MGS-like domain. Positions 930–1059 (LHLPNFGNVV…ESRSFTTEAI (130 aa)) are allosteric domain.

This sequence belongs to the CarB family. Composed of two chains; the small (or glutamine) chain promotes the hydrolysis of glutamine to ammonia, which is used by the large (or ammonia) chain to synthesize carbamoyl phosphate. Tetramer of heterodimers (alpha,beta)4. Mg(2+) is required as a cofactor. The cofactor is Mn(2+).

The catalysed reaction is hydrogencarbonate + L-glutamine + 2 ATP + H2O = carbamoyl phosphate + L-glutamate + 2 ADP + phosphate + 2 H(+). The enzyme catalyses hydrogencarbonate + NH4(+) + 2 ATP = carbamoyl phosphate + 2 ADP + phosphate + 2 H(+). The protein operates within amino-acid biosynthesis; L-arginine biosynthesis; carbamoyl phosphate from bicarbonate: step 1/1. It participates in pyrimidine metabolism; UMP biosynthesis via de novo pathway; (S)-dihydroorotate from bicarbonate: step 1/3. Large subunit of the glutamine-dependent carbamoyl phosphate synthetase (CPSase). CPSase catalyzes the formation of carbamoyl phosphate from the ammonia moiety of glutamine, carbonate, and phosphate donated by ATP, constituting the first step of 2 biosynthetic pathways, one leading to arginine and/or urea and the other to pyrimidine nucleotides. The large subunit (synthetase) binds the substrates ammonia (free or transferred from glutamine from the small subunit), hydrogencarbonate and ATP and carries out an ATP-coupled ligase reaction, activating hydrogencarbonate by forming carboxy phosphate which reacts with ammonia to form carbamoyl phosphate. This chain is Carbamoyl phosphate synthase large chain, found in Streptococcus gordonii (strain Challis / ATCC 35105 / BCRC 15272 / CH1 / DL1 / V288).